Here is a 51-residue protein sequence, read N- to C-terminus: uncharacterized protein (51 aa).

The segment at 1–42 (MKMKTNKYMNMVRPAPPRRADPEGVRDPSTMGGGPNPFLRRS) is disordered.

It localises to the mitochondrion. This is an uncharacterized protein from Saccharomyces cerevisiae (strain ATCC 204508 / S288c) (Baker's yeast).